The following is a 159-amino-acid chain: UPF0699 transmembrane protein YdbS (159 aa).

The next 2 membrane-spanning stretches (helical) occupy residues 22 to 42 (IIIS…SYYF) and 47 to 67 (WISG…VFII).

Belongs to the UPF0699 family.

It is found in the cell membrane. The chain is UPF0699 transmembrane protein YdbS (ydbS) from Bacillus subtilis (strain 168).